The primary structure comprises 207 residues: ATP phosphoribosyltransferase (207 aa).

Belongs to the ATP phosphoribosyltransferase family. Short subfamily. Heteromultimer composed of HisG and HisZ subunits.

The protein resides in the cytoplasm. The enzyme catalyses 1-(5-phospho-beta-D-ribosyl)-ATP + diphosphate = 5-phospho-alpha-D-ribose 1-diphosphate + ATP. Its pathway is amino-acid biosynthesis; L-histidine biosynthesis; L-histidine from 5-phospho-alpha-D-ribose 1-diphosphate: step 1/9. Catalyzes the condensation of ATP and 5-phosphoribose 1-diphosphate to form N'-(5'-phosphoribosyl)-ATP (PR-ATP). Has a crucial role in the pathway because the rate of histidine biosynthesis seems to be controlled primarily by regulation of HisG enzymatic activity. The chain is ATP phosphoribosyltransferase (hisG) from Dictyoglomus turgidum (strain DSM 6724 / Z-1310).